Here is a 538-residue protein sequence, read N- to C-terminus: Guanine nucleotide-binding protein-like 3 (538 aa).

Residues 1–45 (MKRPKLKKASKRMTCHKRYKIQKKVREHHRKLRKEAKKRGHKKPR) show a composition bias toward basic residues. Disordered stretches follow at residues 1-57 (MKRP…APFK) and 69-126 (QQLE…NPKK). Positions 2–46 (KRPKLKKASKRMTCHKRYKIQKKVREHHRKLRKEAKKRGHKKPRK) are basic. Positions 54–95 (APFKEALLREAELRKQQLEELKQQQKLDRQKEQERKRKLEVS) form a coiled coil. Residues 69 to 93 (QQLEELKQQQKLDRQKEQERKRKLE) are compositionally biased toward basic and acidic residues. Lys-79 is subject to N6-acetyllysine. A Glycyl lysine isopeptide (Lys-Gly) (interchain with G-Cter in SUMO2) cross-link involves residue Lys-91. 2 positions are modified to phosphoserine: Ser-95 and Ser-101. Over residues 114–126 (RKKAKAGKQNPKK) the composition is skewed to basic residues. Positions 129–307 (CQELKKVIEA…IIDSPCLIIS (179 aa)) constitute a CP-type G domain. 176–179 (NKSD) is a binding site for GTP. Residues Lys-177, Lys-248, Lys-262, and Lys-270 each participate in a glycyl lysine isopeptide (Lys-Gly) (interchain with G-Cter in SUMO2) cross-link. Residue 256–263 (GFPNVGKS) participates in GTP binding. Residues 277 to 451 (VGISMGLTRS…HLTNRILFRS (175 aa)) are intermediate. 300-303 (DSPC) is a GTP binding site. Positions 460 to 475 (DEKDIVEESPRQTEDK) are enriched in basic and acidic residues. The segment at 460–532 (DEKDIVEESP…RASQEDETYD (73 aa)) is acidic. Residues 460–538 (DEKDIVEESP…ETYDFTTDYI (79 aa)) form a disordered region. Phosphoserine is present on residues Ser-493, Ser-505, and Ser-518. Residues 506 to 518 (PEQSTAGKPSDGS) show a composition bias toward polar residues.

The protein belongs to the TRAFAC class YlqF/YawG GTPase family. In terms of assembly, interacts with MDM2; this interaction stabilizes MDM2. Interaction with MDM2 occurs in the nucleoplasm and is triggered by a nucleolar release mechanism, such as mitosis-induced nucleolar disassembly. Indirectly interacts with TP53, via MDM2-binding. Interacts with TSC22D1 isoform 2. In terms of tissue distribution, expressed in the adult bone marrow population that is enriched in hematopoietic stem cells.

Its subcellular location is the nucleus. The protein localises to the nucleolus. In terms of biological role, may be required to maintain the proliferative capacity of stem cells. Stabilizes MDM2 by preventing its ubiquitination, and hence proteasomal degradation. The polypeptide is Guanine nucleotide-binding protein-like 3 (Gnl3) (Mus musculus (Mouse)).